The primary structure comprises 189 residues: NADH-quinone oxidoreductase subunit B (189 aa).

Cysteine 39, cysteine 40, cysteine 104, and cysteine 135 together coordinate [4Fe-4S] cluster.

It belongs to the complex I 20 kDa subunit family. As to quaternary structure, NDH-1 is composed of 14 different subunits. Subunits NuoB, C, D, E, F, and G constitute the peripheral sector of the complex. [4Fe-4S] cluster serves as cofactor.

It is found in the cell inner membrane. It carries out the reaction a quinone + NADH + 5 H(+)(in) = a quinol + NAD(+) + 4 H(+)(out). Its function is as follows. NDH-1 shuttles electrons from NADH, via FMN and iron-sulfur (Fe-S) centers, to quinones in the respiratory chain. The immediate electron acceptor for the enzyme in this species is believed to be a menaquinone. Couples the redox reaction to proton translocation (for every two electrons transferred, four hydrogen ions are translocated across the cytoplasmic membrane), and thus conserves the redox energy in a proton gradient. This chain is NADH-quinone oxidoreductase subunit B, found in Pelodictyon phaeoclathratiforme (strain DSM 5477 / BU-1).